Here is a 123-residue protein sequence, read N- to C-terminus: uncharacterized protein (123 aa).

The stretch at 36 to 76 forms a coiled coil; that stretch reads VDRQENKKEFLSAEEAREKFKELINQVRSWKEQMSTLSKYA.

This is an uncharacterized protein from Aquifex aeolicus (strain VF5).